A 322-amino-acid polypeptide reads, in one-letter code: Apolipoprotein E (322 aa).

An N-terminal signal peptide occupies residues 1–18 (MKVLWAALLVAFLAGCQG). 8 consecutive repeat copies span residues 84–105 (ALMD…EQLS), 106–127 (PVAE…ARLG), 128–149 (ADME…AMLG), 150–171 (QSXD…KRLL), 172–193 (RDVD…EGAE), 194–215 (RGVS…ARAA), 216–238 (TVGS…ERLR), and 239–260 (ARME…EQVE). The 8 X 22 AA approximate tandem repeats stretch occupies residues 84 to 260 (ALMDETMKEL…RLDEVKEQVE (177 aa)). Met-147 is subject to Methionine sulfoxide. The residue at position 151 (Ser-151) is a Phosphoserine. The LDL and other lipoprotein receptors binding stretch occupies residues 162-172 (HLRKLRKRLLR). 166-169 (LRKR) is a heparin binding site. The tract at residues 214–295 (AATVGSSLAG…SWFEPLVEDM (82 aa)) is lipid-binding and lipoprotein association. An O-linked (GalNAc...) threonine glycan is attached at Thr-216. 234-241 (GERLRARM) serves as a coordination point for heparin. Positions 271-322 (QQMRLQAEAFQARLKSWFEPLVEDMQRQWAGLVEKVQAAVGASAAPVPGDNH) are homooligomerization. The tract at residues 283 to 295 (RLKSWFEPLVEDM) is specificity for association with VLDL.

It belongs to the apolipoprotein A1/A4/E family. As to quaternary structure, homotetramer. May interact with ABCA1; functionally associated with ABCA1 in the biogenesis of HDLs. May interact with APP/A4 amyloid-beta peptide; the interaction is extremely stable in vitro but its physiological significance is unclear. May interact with MAPT. May interact with MAP2. In the cerebrospinal fluid, interacts with secreted SORL1. Interacts with PMEL; this allows the loading of PMEL luminal fragment on ILVs to induce fibril nucleation. APOE exists as multiple glycosylated and sialylated glycoforms within cells and in plasma. The extent of glycosylation and sialylation are tissue and context specific. In terms of processing, glycated in plasma VLDL. Post-translationally, phosphorylated by FAM20C in the extracellular medium.

The protein resides in the secreted. It localises to the extracellular space. The protein localises to the extracellular matrix. Its subcellular location is the extracellular vesicle. It is found in the endosome. The protein resides in the multivesicular body. Its function is as follows. APOE is an apolipoprotein, a protein associating with lipid particles, that mainly functions in lipoprotein-mediated lipid transport between organs via the plasma and interstitial fluids. APOE is a core component of plasma lipoproteins and is involved in their production, conversion and clearance. Apolipoproteins are amphipathic molecules that interact both with lipids of the lipoprotein particle core and the aqueous environment of the plasma. As such, APOE associates with chylomicrons, chylomicron remnants, very low density lipoproteins (VLDL) and intermediate density lipoproteins (IDL) but shows a preferential binding to high-density lipoproteins (HDL). It also binds a wide range of cellular receptors including the LDL receptor/LDLR, the LDL receptor-related proteins LRP1, LRP2 and LRP8 and the very low-density lipoprotein receptor/VLDLR that mediate the cellular uptake of the APOE-containing lipoprotein particles. Finally, APOE also has a heparin-binding activity and binds heparan-sulfate proteoglycans on the surface of cells, a property that supports the capture and the receptor-mediated uptake of APOE-containing lipoproteins by cells. A main function of APOE is to mediate lipoprotein clearance through the uptake of chylomicrons, VLDLs, and HDLs by hepatocytes. APOE is also involved in the biosynthesis by the liver of VLDLs as well as their uptake by peripheral tissues ensuring the delivery of triglycerides and energy storage in muscle, heart and adipose tissues. By participating in the lipoprotein-mediated distribution of lipids among tissues, APOE plays a critical role in plasma and tissues lipid homeostasis. APOE is also involved in two steps of reverse cholesterol transport, the HDLs-mediated transport of cholesterol from peripheral tissues to the liver, and thereby plays an important role in cholesterol homeostasis. First, it is functionally associated with ABCA1 in the biogenesis of HDLs in tissues. Second, it is enriched in circulating HDLs and mediates their uptake by hepatocytes. APOE also plays an important role in lipid transport in the central nervous system, regulating neuron survival and sprouting. The protein is Apolipoprotein E (APOE) of Ateles geoffroyi (Black-handed spider monkey).